The chain runs to 208 residues: Fusaric acid resistance protein FusD (208 aa).

A helical membrane pass occupies residues 7-29 (LLLSMLVSAIAFAVLFPPTAPWL).

It is found in the cell membrane. Its function is as follows. Involved in the resistance (detoxification) of the fungal toxin fusaric acid. This is Fusaric acid resistance protein FusD (fusD) from Burkholderia cepacia (Pseudomonas cepacia).